The chain runs to 300 residues: N-acetylmannosamine kinase (300 aa).

ATP is bound by residues 5-12 (ALDIGGTK) and 132-139 (GVGGGIVL). 4 residues coordinate Zn(2+): His156, Cys166, Cys168, and Cys173.

The protein belongs to the ROK (NagC/XylR) family. NanK subfamily. Homodimer.

The catalysed reaction is an N-acyl-D-mannosamine + ATP = an N-acyl-D-mannosamine 6-phosphate + ADP + H(+). Its pathway is amino-sugar metabolism; N-acetylneuraminate degradation; D-fructose 6-phosphate from N-acetylneuraminate: step 2/5. Catalyzes the phosphorylation of N-acetylmannosamine (ManNAc) to ManNAc-6-P. The chain is N-acetylmannosamine kinase from Haemophilus influenzae (strain PittEE).